A 115-amino-acid chain; its full sequence is Ribonuclease P protein component 4 (115 aa).

Positions 66, 69, 96, and 99 each coordinate Zn(2+).

It belongs to the eukaryotic/archaeal RNase P protein component 4 family. Consists of a catalytic RNA component and at least 4-5 protein subunits. It depends on Zn(2+) as a cofactor.

It is found in the cytoplasm. The enzyme catalyses Endonucleolytic cleavage of RNA, removing 5'-extranucleotides from tRNA precursor.. Functionally, part of ribonuclease P, a protein complex that generates mature tRNA molecules by cleaving their 5'-ends. The chain is Ribonuclease P protein component 4 from Hyperthermus butylicus (strain DSM 5456 / JCM 9403 / PLM1-5).